The sequence spans 129 residues: Sulfurtransferase TusD (129 aa).

C79 (cysteine persulfide intermediate) is an active-site residue.

This sequence belongs to the DsrE/TusD family. As to quaternary structure, heterohexamer, formed by a dimer of trimers. The hexameric TusBCD complex contains 2 copies each of TusB, TusC and TusD. The TusBCD complex interacts with TusE.

Its subcellular location is the cytoplasm. Its function is as follows. Part of a sulfur-relay system required for 2-thiolation of 5-methylaminomethyl-2-thiouridine (mnm(5)s(2)U) at tRNA wobble positions. Accepts sulfur from TusA and transfers it in turn to TusE. In Serratia proteamaculans (strain 568), this protein is Sulfurtransferase TusD.